A 610-amino-acid polypeptide reads, in one-letter code: DEAD-box ATP-dependent RNA helicase 9, mitochondrial (610 aa).

The transit peptide at 1–66 directs the protein to the mitochondrion; it reads MISTVLRRSI…SSPFGVKVRD (66 aa). Residues 116 to 144 carry the Q motif motif; that stretch reads LAIADLGISPEIVKALKGRGIEKLFPIQK. Positions 147–321 constitute a Helicase ATP-binding domain; it reads LEPAMEGRDM…KKYLNNPLTI (175 aa). 160-167 contributes to the ATP binding site; that stretch reads ARTGTGKT. The DEAD box motif lies at 269–272; the sequence is DEAD. Residues 350–494 form the Helicase C-terminal domain; it reads IIGPLVKEHG…ELPSIAVERG (145 aa). Residues 542–557 are compositionally biased toward gly residues; the sequence is SGRSGGGGGSYGGSGG. Residues 542–610 are disordered; it reads SGRSGGGGGS…FGSNDGKRSY (69 aa). Residues 558–572 are compositionally biased toward low complexity; that stretch reads SSSRYSGGSDRSSGF. Residues 573-585 show a composition bias toward gly residues; it reads GSFGSGGSSGGFG. Residues 586–596 show a composition bias toward low complexity; that stretch reads SDRSSQSSGRS.

Belongs to the DEAD box helicase family. DDX21/DDX50 subfamily.

The protein localises to the mitochondrion. The catalysed reaction is ATP + H2O = ADP + phosphate + H(+). The polypeptide is DEAD-box ATP-dependent RNA helicase 9, mitochondrial (RH9) (Arabidopsis thaliana (Mouse-ear cress)).